The following is a 563-amino-acid chain: Eukaryotic translation initiation factor 3 subunit D-1 (563 aa).

A disordered region spans residues 98–167 (VQKPPHQRGR…GPPPKMRESS (70 aa)). Positions 100–121 (KPPHQRGRFRNMRNSRSGRGRN) are enriched in basic residues. Thr-128 carries the post-translational modification Phosphothreonine. The RNA gate stretch occupies residues 291–305 (EFDLLTVNESSVEPP).

The protein belongs to the eIF-3 subunit D family. Component of the eukaryotic translation initiation factor 3 (eIF-3) complex. The eIF-3 complex interacts with pix.

Its subcellular location is the cytoplasm. Functionally, mRNA cap-binding component of the eukaryotic translation initiation factor 3 (eIF-3) complex, which is involved in protein synthesis of a specialized repertoire of mRNAs and, together with other initiation factors, stimulates binding of mRNA and methionyl-tRNAi to the 40S ribosome. The eIF-3 complex specifically targets and initiates translation of a subset of mRNAs involved in cell proliferation. In the eIF-3 complex, eif3d specifically recognizes and binds the 7-methylguanosine cap of a subset of mRNAs. The polypeptide is Eukaryotic translation initiation factor 3 subunit D-1 (Drosophila grimshawi (Hawaiian fruit fly)).